The chain runs to 101 residues: Small ribosomal subunit protein bS6 (101 aa).

It belongs to the bacterial ribosomal protein bS6 family.

Its function is as follows. Binds together with bS18 to 16S ribosomal RNA. This is Small ribosomal subunit protein bS6 from Pseudarthrobacter chlorophenolicus (strain ATCC 700700 / DSM 12829 / CIP 107037 / JCM 12360 / KCTC 9906 / NCIMB 13794 / A6) (Arthrobacter chlorophenolicus).